The sequence spans 403 residues: ATP phosphoribosyltransferase regulatory subunit (403 aa).

It belongs to the class-II aminoacyl-tRNA synthetase family. HisZ subfamily. In terms of assembly, heteromultimer composed of HisG and HisZ subunits.

It localises to the cytoplasm. It functions in the pathway amino-acid biosynthesis; L-histidine biosynthesis; L-histidine from 5-phospho-alpha-D-ribose 1-diphosphate: step 1/9. In terms of biological role, required for the first step of histidine biosynthesis. May allow the feedback regulation of ATP phosphoribosyltransferase activity by histidine. The protein is ATP phosphoribosyltransferase regulatory subunit of Nostoc punctiforme (strain ATCC 29133 / PCC 73102).